The primary structure comprises 236 residues: 2,3,4,5-tetrahydropyridine-2,6-dicarboxylate N-acetyltransferase (236 aa).

Belongs to the transferase hexapeptide repeat family. DapH subfamily.

It carries out the reaction (S)-2,3,4,5-tetrahydrodipicolinate + acetyl-CoA + H2O = L-2-acetamido-6-oxoheptanedioate + CoA. Its pathway is amino-acid biosynthesis; L-lysine biosynthesis via DAP pathway; LL-2,6-diaminopimelate from (S)-tetrahydrodipicolinate (acetylase route): step 1/3. Catalyzes the transfer of an acetyl group from acetyl-CoA to tetrahydrodipicolinate. The chain is 2,3,4,5-tetrahydropyridine-2,6-dicarboxylate N-acetyltransferase from Pediococcus pentosaceus (strain ATCC 25745 / CCUG 21536 / LMG 10740 / 183-1w).